Consider the following 525-residue polypeptide: Cysteine--tRNA ligase (525 aa).

Residue Cys49 participates in Zn(2+) binding. The 'HIGH' region signature appears at 51 to 61; the sequence is VTVYDLCHLGH. Zn(2+)-binding residues include Cys258, His283, and Glu287. The short motif at 315-319 is the 'KMSKS' region element; the sequence is KMSKS. An ATP-binding site is contributed by Lys318.

This sequence belongs to the class-I aminoacyl-tRNA synthetase family. Monomer. The cofactor is Zn(2+).

The protein resides in the cytoplasm. It catalyses the reaction tRNA(Cys) + L-cysteine + ATP = L-cysteinyl-tRNA(Cys) + AMP + diphosphate. The polypeptide is Cysteine--tRNA ligase (Synechococcus sp. (strain JA-2-3B'a(2-13)) (Cyanobacteria bacterium Yellowstone B-Prime)).